We begin with the raw amino-acid sequence, 1176 residues long: DNA-directed RNA polymerase subunit beta (1176 aa).

The span at 13–30 shows a compositional bias: polar residues; it reads TDASLHQGRPQSSSNSSV. The disordered stretch occupies residues 13–35; sequence TDASLHQGRPQSSSNSSVPGAPN.

This sequence belongs to the RNA polymerase beta chain family. The RNAP catalytic core consists of 2 alpha, 1 beta, 1 beta' and 1 omega subunit. When a sigma factor is associated with the core the holoenzyme is formed, which can initiate transcription.

The enzyme catalyses RNA(n) + a ribonucleoside 5'-triphosphate = RNA(n+1) + diphosphate. DNA-dependent RNA polymerase catalyzes the transcription of DNA into RNA using the four ribonucleoside triphosphates as substrates. This is DNA-directed RNA polymerase subunit beta from Mycobacterium ulcerans (strain Agy99).